We begin with the raw amino-acid sequence, 146 residues long: Large ribosomal subunit protein uL15 (146 aa).

Over residues 1 to 13 the composition is skewed to basic and acidic residues; the sequence is MKLHELKPAEGSR. Positions 1 to 59 are disordered; that stretch reads MKLHELKPAEGSRKVRNRVGRGTSSGNGKTSGRGQKGQKARSGGGVRLGFEGGQTPLFR. 2 stretches are compositionally biased toward gly residues: residues 23 to 35 and 42 to 52; these read TSSGNGKTSGRGQ and SGGGVRLGFEG.

The protein belongs to the universal ribosomal protein uL15 family. As to quaternary structure, part of the 50S ribosomal subunit.

Its function is as follows. Binds to the 23S rRNA. This chain is Large ribosomal subunit protein uL15, found in Streptococcus agalactiae serotype Ia (strain ATCC 27591 / A909 / CDC SS700).